The primary structure comprises 284 residues: 2-dehydro-3-deoxyphosphooctonate aldolase (284 aa).

Belongs to the KdsA family.

Its subcellular location is the cytoplasm. It catalyses the reaction D-arabinose 5-phosphate + phosphoenolpyruvate + H2O = 3-deoxy-alpha-D-manno-2-octulosonate-8-phosphate + phosphate. The protein operates within carbohydrate biosynthesis; 3-deoxy-D-manno-octulosonate biosynthesis; 3-deoxy-D-manno-octulosonate from D-ribulose 5-phosphate: step 2/3. It functions in the pathway bacterial outer membrane biogenesis; lipopolysaccharide biosynthesis. In Escherichia coli O157:H7, this protein is 2-dehydro-3-deoxyphosphooctonate aldolase.